Here is a 142-residue protein sequence, read N- to C-terminus: Small ribosomal subunit protein bS6 (142 aa).

Residues 110–133 show a composition bias toward basic and acidic residues; that stretch reads NKKPSHAKEKHEKTEHTHSHHTEE. A disordered region spans residues 110–142; it reads NKKPSHAKEKHEKTEHTHSHHTEETESVGSHSK.

The protein belongs to the bacterial ribosomal protein bS6 family.

Functionally, binds together with bS18 to 16S ribosomal RNA. The chain is Small ribosomal subunit protein bS6 from Helicobacter pylori (strain Shi470).